The sequence spans 756 residues: Polyribonucleotide nucleotidyltransferase (756 aa).

Residues aspartate 527 and aspartate 533 each coordinate Mg(2+). One can recognise a KH domain in the interval proline 593 to isoleucine 652. One can recognise an S1 motif domain in the interval glycine 664 to valine 733.

The protein belongs to the polyribonucleotide nucleotidyltransferase family. Requires Mg(2+) as cofactor.

It is found in the cytoplasm. It catalyses the reaction RNA(n+1) + phosphate = RNA(n) + a ribonucleoside 5'-diphosphate. Involved in mRNA degradation. Catalyzes the phosphorolysis of single-stranded polyribonucleotides processively in the 3'- to 5'-direction. This is Polyribonucleotide nucleotidyltransferase from Mycolicibacterium gilvum (strain PYR-GCK) (Mycobacterium gilvum (strain PYR-GCK)).